The primary structure comprises 244 residues: tRNA (guanine-N(7)-)-methyltransferase (244 aa).

Residues E75, E100, D127, and D150 each contribute to the S-adenosyl-L-methionine site. The active site involves D150. Substrate-binding positions include K154, D186, and 223–226; that span reads TRFE.

Belongs to the class I-like SAM-binding methyltransferase superfamily. TrmB family.

The enzyme catalyses guanosine(46) in tRNA + S-adenosyl-L-methionine = N(7)-methylguanosine(46) in tRNA + S-adenosyl-L-homocysteine. Its pathway is tRNA modification; N(7)-methylguanine-tRNA biosynthesis. In terms of biological role, catalyzes the formation of N(7)-methylguanine at position 46 (m7G46) in tRNA. In Xylella fastidiosa (strain M12), this protein is tRNA (guanine-N(7)-)-methyltransferase.